Consider the following 556-residue polypeptide: Capsid vertex component 2 (556 aa).

An interaction with major capsid protein/MCP region spans residues Met1 to Val54. The disordered stretch occupies residues Gln104 to Asn136. A compositionally biased stretch (pro residues) spans Val121–Pro132.

Belongs to the herpesviridae CVC2 protein family. As to quaternary structure, heterodimerizes with CVC1. Interacts with major capsid protein/MCP and triplex capsid protein 1/TRX1 at the pentamer vertices. Interacts with the large tegument protein/LTP.

The protein resides in the virion. It localises to the host nucleus. Functionally, capsid vertex-specific component that plays a role during viral DNA encapsidation, assuring correct genome cleavage and presumably stabilizing capsids that contain full-length viral genomes. Participates in the interaction between the capsid and the tegument through interaction with the large tegument protein/LTP. The polypeptide is Capsid vertex component 2 (Connochaetes taurinus (Blue wildebeest)).